The sequence spans 108 residues: UPF0060 membrane protein CC_1976 (108 aa).

4 consecutive transmembrane segments (helical) span residues 4–24, 27–47, 59–79, and 85–105; these read FAIY…FWAW, LGKS…FALL, AFAA…QVVE, and RWDL…LFGP.

It belongs to the UPF0060 family.

The protein localises to the cell inner membrane. The polypeptide is UPF0060 membrane protein CC_1976 (Caulobacter vibrioides (strain ATCC 19089 / CIP 103742 / CB 15) (Caulobacter crescentus)).